A 71-amino-acid polypeptide reads, in one-letter code: uncharacterized protein (71 aa).

This is an uncharacterized protein from Autographa californica nuclear polyhedrosis virus (AcMNPV).